A 162-amino-acid polypeptide reads, in one-letter code: NADH-quinone oxidoreductase subunit I (162 aa).

4Fe-4S ferredoxin-type domains lie at 52–82 (LRRY…IEAG) and 93–122 (VRYD…EGPN). Residues cysteine 62, cysteine 65, cysteine 68, cysteine 72, cysteine 102, cysteine 105, cysteine 108, and cysteine 112 each coordinate [4Fe-4S] cluster.

This sequence belongs to the complex I 23 kDa subunit family. NDH-1 is composed of 14 different subunits. Subunits NuoA, H, J, K, L, M, N constitute the membrane sector of the complex. [4Fe-4S] cluster serves as cofactor.

The protein localises to the cell inner membrane. The catalysed reaction is a quinone + NADH + 5 H(+)(in) = a quinol + NAD(+) + 4 H(+)(out). Functionally, NDH-1 shuttles electrons from NADH, via FMN and iron-sulfur (Fe-S) centers, to quinones in the respiratory chain. The immediate electron acceptor for the enzyme in this species is believed to be ubiquinone. Couples the redox reaction to proton translocation (for every two electrons transferred, four hydrogen ions are translocated across the cytoplasmic membrane), and thus conserves the redox energy in a proton gradient. In Nitrobacter hamburgensis (strain DSM 10229 / NCIMB 13809 / X14), this protein is NADH-quinone oxidoreductase subunit I.